Here is a 206-residue protein sequence, read N- to C-terminus: dTTP/UTP pyrophosphatase (206 aa).

Residue aspartate 87 is the Proton acceptor of the active site.

The protein belongs to the Maf family. YhdE subfamily. The cofactor is a divalent metal cation.

It localises to the cytoplasm. It carries out the reaction dTTP + H2O = dTMP + diphosphate + H(+). The enzyme catalyses UTP + H2O = UMP + diphosphate + H(+). Nucleoside triphosphate pyrophosphatase that hydrolyzes dTTP and UTP. May have a dual role in cell division arrest and in preventing the incorporation of modified nucleotides into cellular nucleic acids. The polypeptide is dTTP/UTP pyrophosphatase (Aromatoleum aromaticum (strain DSM 19018 / LMG 30748 / EbN1) (Azoarcus sp. (strain EbN1))).